The sequence spans 341 residues: Phosphate acyltransferase (341 aa).

Belongs to the PlsX family. Homodimer. Probably interacts with PlsY.

It localises to the cytoplasm. The enzyme catalyses a fatty acyl-[ACP] + phosphate = an acyl phosphate + holo-[ACP]. Its pathway is lipid metabolism; phospholipid metabolism. In terms of biological role, catalyzes the reversible formation of acyl-phosphate (acyl-PO(4)) from acyl-[acyl-carrier-protein] (acyl-ACP). This enzyme utilizes acyl-ACP as fatty acyl donor, but not acyl-CoA. In Lacticaseibacillus casei (strain BL23) (Lactobacillus casei), this protein is Phosphate acyltransferase.